Consider the following 32-residue polypeptide: Photosystem I reaction center subunit XII (32 aa).

The helical transmembrane segment at 10 to 27 (VVALISALVTGILALRLG) threads the bilayer.

Belongs to the PsaM family.

The protein localises to the plastid. The protein resides in the chloroplast thylakoid membrane. In Zygnema circumcarinatum (Green alga), this protein is Photosystem I reaction center subunit XII.